We begin with the raw amino-acid sequence, 960 residues long: Testis anion transporter 1 (960 aa).

The Cytoplasmic segment spans residues 1 to 93 (MQPDRSFQSF…YRFKDWLLGD (93 aa)). The chain crosses the membrane as a helical span at residues 94 to 114 (LLAGISVGLVQIPQVLMLGLL). Residues 115-117 (ARH) lie on the Extracellular side of the membrane. Residues 118–138 (LIPPLNVSYAAFCASVIYGIF) traverse the membrane as a helical segment. A topological domain (cytoplasmic) is located at residue glycine 139. The helical transmembrane segment at 140 to 160 (SCHQMSIGTFFLVSALAINVL) threads the bilayer. Topologically, residues 161–201 (RTQPFNRGHLLLGTFIQADFSNTSFYENYNRSLSSVASVTL) are extracellular. The N-linked (GlcNAc...) asparagine glycan is linked to asparagine 190. 2 helical membrane-spanning segments follow: residues 202–222 (LTGIIQLSMGMLGFGFIVAYI) and 223–243 (PEAAISAYLAATALHVMLSQL). The Cytoplasmic segment spans residues 244–268 (TCIFGIMISYNSGPIAFFYNIINYC). The chain crosses the membrane as a helical span at residues 269 to 289 (LGLPKANSTSILLFLTAMVAL). The Extracellular portion of the chain corresponds to 290–353 (RINKCIRISF…PVTPDMSNLT (64 aa)). Residues 354–374 (EVLIESFSLALVSSSLLVFLG) traverse the membrane as a helical segment. At 375–390 (KKIASFHNYDVNSNQD) the chain is on the cytoplasmic side. The chain crosses the membrane as a helical span at residues 391 to 411 (LIAIGLCNVVSSFFRSYVFTG). Topologically, residues 412–427 (AVARTIIQDKTGGRQQ) are extracellular. Residues 428–448 (FASLVGAGIMLLLMMKMARFF) traverse the membrane as a helical segment. Topologically, residues 449–453 (YRLPN) are cytoplasmic. The helical transmembrane segment at 454–474 (AIVAGIILSNVLPYLEAVYTL) threads the bilayer. The Extracellular portion of the chain corresponds to 475–494 (PSLWRQNQYDCLIWMVTFMS). A helical transmembrane segment spans residues 495–515 (AILLGLDIGLVVAVTFAFFII). Residues 516 to 960 (TVQSHRTKIL…ADTSEDALEI (445 aa)) lie on the Cytoplasmic side of the membrane. The 252-residue stretch at 541–792 (DYREVANIPG…LTLHDAVLFA (252 aa)) folds into the STAS domain. The interval 662-957 (ITSSSSQRNP…TSKADTSEDA (296 aa)) is interaction with RACGAP1. Disordered regions lie at residues 807–857 (ESET…EESD) and 881–960 (EVEP…ALEI). Over residues 818–827 (ETDKKEESRH) the composition is skewed to basic and acidic residues. Positions 884–904 (PESELEPESELDQETELEPEP) are enriched in acidic residues. The span at 926 to 935 (SPTQTQARTQ) shows a compositional bias: polar residues.

The protein belongs to the SLC26A/SulP transporter (TC 2.A.53) family. Interacts with RACGAP1. Interacts with CFTR; stimulates anion transport activity of CFTR. N-glycosylated.

The protein resides in the membrane. The enzyme catalyses sulfate(out) + chloride(in) = sulfate(in) + chloride(out). It carries out the reaction oxalate(in) + chloride(out) = oxalate(out) + chloride(in). In terms of biological role, antiporter that mediates the exchange of sulfate and oxalate against chloride ions across a membrane. Stimulates anion transport activity of CFTR. May cooperate with CFTR in the regulation of chloride and bicarbonate ions fluxes required for activation of the ADCY10/PKA pathway during sperm motility and sperm capacitation. May play a role in sperm tail differentiation and motility and hence male fertility. The sequence is that of Testis anion transporter 1 from Bos taurus (Bovine).